A 207-amino-acid polypeptide reads, in one-letter code: Large ribosomal subunit protein uL4 (207 aa).

Positions 52-76 (KNTSLVSGGGKKPWKQKGTGRARQG) are disordered.

Belongs to the universal ribosomal protein uL4 family. In terms of assembly, part of the 50S ribosomal subunit.

One of the primary rRNA binding proteins, this protein initially binds near the 5'-end of the 23S rRNA. It is important during the early stages of 50S assembly. It makes multiple contacts with different domains of the 23S rRNA in the assembled 50S subunit and ribosome. Functionally, forms part of the polypeptide exit tunnel. The sequence is that of Large ribosomal subunit protein uL4 from Myxococcus xanthus (strain DK1622).